The following is a 200-amino-acid chain: ATP-dependent Clp protease proteolytic subunit 2 (200 aa).

Ser101 serves as the catalytic Nucleophile. His126 is a catalytic residue.

Belongs to the peptidase S14 family. As to quaternary structure, fourteen ClpP subunits assemble into 2 heptameric rings which stack back to back to give a disk-like structure with a central cavity, resembling the structure of eukaryotic proteasomes.

The protein resides in the cytoplasm. The enzyme catalyses Hydrolysis of proteins to small peptides in the presence of ATP and magnesium. alpha-casein is the usual test substrate. In the absence of ATP, only oligopeptides shorter than five residues are hydrolyzed (such as succinyl-Leu-Tyr-|-NHMec, and Leu-Tyr-Leu-|-Tyr-Trp, in which cleavage of the -Tyr-|-Leu- and -Tyr-|-Trp bonds also occurs).. Cleaves peptides in various proteins in a process that requires ATP hydrolysis. Has a chymotrypsin-like activity. Plays a major role in the degradation of misfolded proteins. This Prochlorococcus marinus (strain MIT 9313) protein is ATP-dependent Clp protease proteolytic subunit 2.